Consider the following 68-residue polypeptide: Acylphosphatase (68 aa).

One can recognise an Acylphosphatase-like domain in the interval 3–68 (RIACTVHGRV…RCTAGLPSAP (66 aa)). Residues Arg18 and Asn36 contribute to the active site.

This sequence belongs to the acylphosphatase family.

The enzyme catalyses an acyl phosphate + H2O = a carboxylate + phosphate + H(+). This chain is Acylphosphatase (acyP), found in Oleidesulfovibrio alaskensis (strain ATCC BAA-1058 / DSM 17464 / G20) (Desulfovibrio alaskensis).